The chain runs to 316 residues: tRNA dimethylallyltransferase (316 aa).

17-24 (GPTASGKT) is a binding site for ATP. 19 to 24 (TASGKT) is a binding site for substrate. 3 interaction with substrate tRNA regions span residues 42–45 (DSAL), 166–170 (QRLSR), and 247–252 (RCVGYR).

The protein belongs to the IPP transferase family. As to quaternary structure, monomer. It depends on Mg(2+) as a cofactor.

It catalyses the reaction adenosine(37) in tRNA + dimethylallyl diphosphate = N(6)-dimethylallyladenosine(37) in tRNA + diphosphate. Functionally, catalyzes the transfer of a dimethylallyl group onto the adenine at position 37 in tRNAs that read codons beginning with uridine, leading to the formation of N6-(dimethylallyl)adenosine (i(6)A). The chain is tRNA dimethylallyltransferase from Salmonella paratyphi A (strain ATCC 9150 / SARB42).